The sequence spans 185 residues: Translation initiation factor IF-3 (185 aa).

The protein belongs to the IF-3 family. In terms of assembly, monomer.

Its subcellular location is the cytoplasm. IF-3 binds to the 30S ribosomal subunit and shifts the equilibrium between 70S ribosomes and their 50S and 30S subunits in favor of the free subunits, thus enhancing the availability of 30S subunits on which protein synthesis initiation begins. The protein is Translation initiation factor IF-3 of Rickettsia felis (strain ATCC VR-1525 / URRWXCal2) (Rickettsia azadi).